The sequence spans 238 residues: MGQKVNPIGMRLQVNRTWDSRWFAESKDYGNLLLEDLKMREFIHDYAKQAGVSKVIIERPHRKCRVTIHTARPGVIIGKKGADIETLRKKLSAFTKSELHLNIVEIRKPELDAQLVAESIAQQMERRVSFRRAMKRGVQNAMRIGALGIRVNVSGRLGGAEIARTEWYREGRVPLHTLRADIDYATSEATTPYGIIGVKVWIFKGEILEHDPQAHDRRHSEAQEGAAPRPPRRDRERA.

The 69-residue stretch at 39 to 107 folds into the KH type-2 domain; sequence MREFIHDYAK…ELHLNIVEIR (69 aa). A compositionally biased stretch (basic and acidic residues) spans 212-222; sequence PQAHDRRHSEA. The disordered stretch occupies residues 212–238; the sequence is PQAHDRRHSEAQEGAAPRPPRRDRERA.

It belongs to the universal ribosomal protein uS3 family. In terms of assembly, part of the 30S ribosomal subunit. Forms a tight complex with proteins S10 and S14.

Functionally, binds the lower part of the 30S subunit head. Binds mRNA in the 70S ribosome, positioning it for translation. The chain is Small ribosomal subunit protein uS3 from Cereibacter sphaeroides (strain ATCC 17029 / ATH 2.4.9) (Rhodobacter sphaeroides).